The following is a 224-amino-acid chain: ATP-dependent dethiobiotin synthetase BioD (224 aa).

ATP is bound at residue 14–19 (GIGKTV). Mg(2+) is bound at residue Thr-18. Lys-39 is a catalytic residue. Position 43 (Ser-43) interacts with substrate. ATP contacts are provided by residues Asp-56, 117 to 120 (EGVG), and 177 to 178 (NE). Mg(2+) is bound by residues Asp-56 and Glu-117.

This sequence belongs to the dethiobiotin synthetase family. In terms of assembly, homodimer. It depends on Mg(2+) as a cofactor.

Its subcellular location is the cytoplasm. It catalyses the reaction (7R,8S)-7,8-diammoniononanoate + CO2 + ATP = (4R,5S)-dethiobiotin + ADP + phosphate + 3 H(+). The protein operates within cofactor biosynthesis; biotin biosynthesis; biotin from 7,8-diaminononanoate: step 1/2. Catalyzes a mechanistically unusual reaction, the ATP-dependent insertion of CO2 between the N7 and N8 nitrogen atoms of 7,8-diaminopelargonic acid (DAPA, also called 7,8-diammoniononanoate) to form a ureido ring. This is ATP-dependent dethiobiotin synthetase BioD from Xanthomonas campestris pv. campestris (strain B100).